The chain runs to 198 residues: uncharacterized protein (198 aa).

Positions 1–23 are disordered; it reads MYFGKTRQSDQSGRVPPNQNVTT. Over residues 9 to 23 the composition is skewed to polar residues; the sequence is SDQSGRVPPNQNVTT. The Mo-molybdopterin site is built by Cys-75, His-144, and Arg-149.

Mo-molybdopterin is required as a cofactor.

This is an uncharacterized protein from Bacillus subtilis (strain 168).